Reading from the N-terminus, the 236-residue chain is Phosphoribosylaminoimidazole-succinocarboxamide synthase (236 aa).

Belongs to the SAICAR synthetase family.

It carries out the reaction 5-amino-1-(5-phospho-D-ribosyl)imidazole-4-carboxylate + L-aspartate + ATP = (2S)-2-[5-amino-1-(5-phospho-beta-D-ribosyl)imidazole-4-carboxamido]succinate + ADP + phosphate + 2 H(+). It functions in the pathway purine metabolism; IMP biosynthesis via de novo pathway; 5-amino-1-(5-phospho-D-ribosyl)imidazole-4-carboxamide from 5-amino-1-(5-phospho-D-ribosyl)imidazole-4-carboxylate: step 1/2. The protein is Phosphoribosylaminoimidazole-succinocarboxamide synthase of Rickettsia akari (strain Hartford).